Reading from the N-terminus, the 316-residue chain is Olfactory receptor 10H4 (316 aa).

The Extracellular portion of the chain corresponds to 1–26 (MPSQNYSIISEFNLFGFSAFPQHLLP). Residue Asn5 is glycosylated (N-linked (GlcNAc...) asparagine). Residues 27–47 (ILFLLYLLMFLFTLLGNLLIM) form a helical membrane-spanning segment. Over 48 to 55 (ATIWIEHR) the chain is Cytoplasmic. A helical membrane pass occupies residues 56–76 (LHTPMYLFLCTLSVSEILFTV). Residues 77–100 (AITPRMLADLLSTHHSITFVACAN) are Extracellular-facing. A disulfide bridge connects residues Cys98 and Cys190. Residues 101–121 (QMFFSFMFGFTHSFLLLVMGY) form a helical membrane-spanning segment. Topologically, residues 122–140 (DRYVAICHPLRYNVLMSPR) are cytoplasmic. A helical transmembrane segment spans residues 141–161 (DCAHLVACTWAGGSVMGMMVT). At 162–198 (TIVFHLTFCGSNVIHHFFCHVLSLLKLACENKTSSVI) the chain is on the extracellular side. A helical membrane pass occupies residues 199-219 (MGVMLVCVTALIGCLFLIILS). Residues 220 to 239 (YVFIVAAILRIPSAEGRHKT) lie on the Cytoplasmic side of the membrane. The helical transmembrane segment at 240–260 (FSTCVSHLTVVVTHYSFASFI) threads the bilayer. At 261–273 (YLKPKGLHSMYSD) the chain is on the extracellular side. Residues 274–294 (ALMATTYTVFTPFLSPIIFSL) traverse the membrane as a helical segment. The Cytoplasmic segment spans residues 295-316 (RNKELKNAINKNFYRKFCPPSS).

Belongs to the G-protein coupled receptor 1 family.

It is found in the cell membrane. Functionally, odorant receptor. The chain is Olfactory receptor 10H4 (OR10H4) from Homo sapiens (Human).